Consider the following 128-residue polypeptide: uncharacterized protein (128 aa).

The 124-residue stretch at 5–128 folds into the VOC domain; sequence SIHHIAIICS…DQLPLELYEQ (124 aa). A divalent metal cation is bound by residues His8, Glu56, His77, and Glu124.

This is an uncharacterized protein from Bacillus subtilis (strain 168).